Consider the following 372-residue polypeptide: Probable leucine aminopeptidase MCYG_03459 (372 aa).

Residues 1-18 form the signal peptide; sequence MKISTLAVVSAFAVTAIA. N-linked (GlcNAc...) asparagine glycosylation is present at asparagine 95. Residues histidine 175 and aspartate 194 each contribute to the Zn(2+) site. 2 N-linked (GlcNAc...) asparagine glycosylation sites follow: asparagine 195 and asparagine 219. Glutamate 233 and aspartate 260 together coordinate Zn(2+). An intrachain disulfide couples cysteine 305 to cysteine 309. Position 338 (histidine 338) interacts with Zn(2+).

Belongs to the peptidase M28 family. M28E subfamily. As to quaternary structure, monomer. Requires Zn(2+) as cofactor.

The protein localises to the secreted. Functionally, probable extracellular aminopeptidase which contributes to pathogenicity. The chain is Probable leucine aminopeptidase MCYG_03459 from Arthroderma otae (strain ATCC MYA-4605 / CBS 113480) (Microsporum canis).